The primary structure comprises 371 residues: Queuine tRNA-ribosyltransferase (371 aa).

D90 (proton acceptor) is an active-site residue. Residues 90–94, D144, Q189, and G215 each bind substrate; that span reads DSGGF. The tract at residues 246-252 is RNA binding; the sequence is GVGTPEN. D265 acts as the Nucleophile in catalysis. Residues 270–274 form an RNA binding; important for wobble base 34 recognition region; the sequence is TRNAR. 4 residues coordinate Zn(2+): C303, C305, C308, and H334.

The protein belongs to the queuine tRNA-ribosyltransferase family. Homodimer. Within each dimer, one monomer is responsible for RNA recognition and catalysis, while the other monomer binds to the replacement base PreQ1. The cofactor is Zn(2+).

The enzyme catalyses 7-aminomethyl-7-carbaguanine + guanosine(34) in tRNA = 7-aminomethyl-7-carbaguanosine(34) in tRNA + guanine. It functions in the pathway tRNA modification; tRNA-queuosine biosynthesis. Catalyzes the base-exchange of a guanine (G) residue with the queuine precursor 7-aminomethyl-7-deazaguanine (PreQ1) at position 34 (anticodon wobble position) in tRNAs with GU(N) anticodons (tRNA-Asp, -Asn, -His and -Tyr). Catalysis occurs through a double-displacement mechanism. The nucleophile active site attacks the C1' of nucleotide 34 to detach the guanine base from the RNA, forming a covalent enzyme-RNA intermediate. The proton acceptor active site deprotonates the incoming PreQ1, allowing a nucleophilic attack on the C1' of the ribose to form the product. After dissociation, two additional enzymatic reactions on the tRNA convert PreQ1 to queuine (Q), resulting in the hypermodified nucleoside queuosine (7-(((4,5-cis-dihydroxy-2-cyclopenten-1-yl)amino)methyl)-7-deazaguanosine). The polypeptide is Queuine tRNA-ribosyltransferase (Helicobacter pylori (strain G27)).